A 237-amino-acid polypeptide reads, in one-letter code: tRNA1(Val) (adenine(37)-N6)-methyltransferase (237 aa).

It belongs to the methyltransferase superfamily. tRNA (adenine-N(6)-)-methyltransferase family.

The protein resides in the cytoplasm. It catalyses the reaction adenosine(37) in tRNA1(Val) + S-adenosyl-L-methionine = N(6)-methyladenosine(37) in tRNA1(Val) + S-adenosyl-L-homocysteine + H(+). Specifically methylates the adenine in position 37 of tRNA(1)(Val) (anticodon cmo5UAC). The polypeptide is tRNA1(Val) (adenine(37)-N6)-methyltransferase (Bacteroides fragilis (strain YCH46)).